Consider the following 479-residue polypeptide: Ribosomal RNA small subunit methyltransferase F (479 aa).

S-adenosyl-L-methionine-binding positions include 125 to 131 (AAAPGSK), E149, D176, and D194. The active-site Nucleophile is C247.

The protein belongs to the class I-like SAM-binding methyltransferase superfamily. RsmB/NOP family.

The protein localises to the cytoplasm. It catalyses the reaction cytidine(1407) in 16S rRNA + S-adenosyl-L-methionine = 5-methylcytidine(1407) in 16S rRNA + S-adenosyl-L-homocysteine + H(+). Its function is as follows. Specifically methylates the cytosine at position 1407 (m5C1407) of 16S rRNA. The polypeptide is Ribosomal RNA small subunit methyltransferase F (Escherichia coli O157:H7 (strain EC4115 / EHEC)).